The sequence spans 802 residues: Leucine--tRNA ligase (802 aa).

The 'HIGH' region signature appears at 40-51 (PYPSGAGLHVGH). The 'KMSKS' region signature appears at 576–580 (KMSKS). Lys579 serves as a coordination point for ATP.

The protein belongs to the class-I aminoacyl-tRNA synthetase family.

It is found in the cytoplasm. The catalysed reaction is tRNA(Leu) + L-leucine + ATP = L-leucyl-tRNA(Leu) + AMP + diphosphate. In Bacillus cereus (strain ATCC 14579 / DSM 31 / CCUG 7414 / JCM 2152 / NBRC 15305 / NCIMB 9373 / NCTC 2599 / NRRL B-3711), this protein is Leucine--tRNA ligase.